Here is a 206-residue protein sequence, read N- to C-terminus: Ribosomal RNA small subunit methyltransferase G (206 aa).

S-adenosyl-L-methionine-binding positions include Gly73, Leu78, 124-125 (VE), and Arg139.

The protein belongs to the methyltransferase superfamily. RNA methyltransferase RsmG family.

Its subcellular location is the cytoplasm. The enzyme catalyses guanosine(527) in 16S rRNA + S-adenosyl-L-methionine = N(7)-methylguanosine(527) in 16S rRNA + S-adenosyl-L-homocysteine. In terms of biological role, specifically methylates the N7 position of guanine in position 527 of 16S rRNA. The protein is Ribosomal RNA small subunit methyltransferase G of Yersinia pseudotuberculosis serotype O:1b (strain IP 31758).